The primary structure comprises 499 residues: Bifunctional purine biosynthesis protein PurH (499 aa).

In terms of domain architecture, MGS-like spans 1-144 (MIKRALISVF…KNFKDVVVLT (144 aa)).

It belongs to the PurH family.

It catalyses the reaction (6R)-10-formyltetrahydrofolate + 5-amino-1-(5-phospho-beta-D-ribosyl)imidazole-4-carboxamide = 5-formamido-1-(5-phospho-D-ribosyl)imidazole-4-carboxamide + (6S)-5,6,7,8-tetrahydrofolate. The enzyme catalyses IMP + H2O = 5-formamido-1-(5-phospho-D-ribosyl)imidazole-4-carboxamide. It participates in purine metabolism; IMP biosynthesis via de novo pathway; 5-formamido-1-(5-phospho-D-ribosyl)imidazole-4-carboxamide from 5-amino-1-(5-phospho-D-ribosyl)imidazole-4-carboxamide (10-formyl THF route): step 1/1. It functions in the pathway purine metabolism; IMP biosynthesis via de novo pathway; IMP from 5-formamido-1-(5-phospho-D-ribosyl)imidazole-4-carboxamide: step 1/1. The polypeptide is Bifunctional purine biosynthesis protein PurH (Clostridium botulinum (strain Kyoto / Type A2)).